The following is a 281-amino-acid chain: ATP phosphoribosyltransferase (281 aa).

This sequence belongs to the ATP phosphoribosyltransferase family. Long subfamily. It depends on Mg(2+) as a cofactor.

Its subcellular location is the cytoplasm. It catalyses the reaction 1-(5-phospho-beta-D-ribosyl)-ATP + diphosphate = 5-phospho-alpha-D-ribose 1-diphosphate + ATP. Its pathway is amino-acid biosynthesis; L-histidine biosynthesis; L-histidine from 5-phospho-alpha-D-ribose 1-diphosphate: step 1/9. Its activity is regulated as follows. Feedback inhibited by histidine. Catalyzes the condensation of ATP and 5-phosphoribose 1-diphosphate to form N'-(5'-phosphoribosyl)-ATP (PR-ATP). Has a crucial role in the pathway because the rate of histidine biosynthesis seems to be controlled primarily by regulation of HisG enzymatic activity. The sequence is that of ATP phosphoribosyltransferase from Corynebacterium efficiens (strain DSM 44549 / YS-314 / AJ 12310 / JCM 11189 / NBRC 100395).